A 423-amino-acid polypeptide reads, in one-letter code: uncharacterized protein (423 aa).

Residues K181, D183, and E184 each contribute to the Mg(2+) site. At K181 the chain carries N6-carboxylysine.

Belongs to the RuBisCO large chain family. Type IV subfamily. The cofactor is Mg(2+).

Its function is as follows. May be involved in sulfur metabolism and oxidative stress response. Does not show RuBisCO activity. This is an uncharacterized protein from Bordetella bronchiseptica (strain ATCC BAA-588 / NCTC 13252 / RB50) (Alcaligenes bronchisepticus).